The following is a 469-amino-acid chain: MARGLGAPHWVAVGLLTWAALGLLVAGHGGHGDLHEDLHEDFHGHSHRRSHEDFHHGHSYAHGHGHTHESIWHGHTHGHEHGHAHEDLHHGHSHGQSHESLYHRGHGHDHEHSHGGYGESGAPGIKQDLDTVTLWAYALGATVLISAAPFFVLFLIPVESNSPRHRSLLQILLSFASGGLLGDAFLHLIPHALEPHSHHPLEQPGHGHSHSGQGPILSVGLWVLSGIVAFLVVEKFVRHVKGGHGHSHGHGHTHGHTQGSHGHGTQKYPSKEKQSSEEEEKEANGSRKRKGGSTRLKDGPLRPQNSEEEKTGSDLRVSGYLNLAADLAHNFTDGLAIGASFRGGRGLGILTTMTVLLHEVPHEVGDFAILVQSGCSKKQAMRLQLLTAIGALAGTACALLTEGGAVGSEVAGGTGSGWVLPFTAGGFIYVATVSVLPELLREASPLQSLLEVLGLLGGVVMMVLIAHLE.

The chain crosses the membrane as a helical span at residues 5–25 (LGAPHWVAVGLLTWAALGLLV). Composition is skewed to basic and acidic residues over residues 43–56 (HGHS…DFHH) and 66–114 (HTHE…EHSH). The tract at residues 43 to 122 (HGHSHRRSHE…SHGGYGESGA (80 aa)) is disordered. Residue His66 is modified to Pros-methylhistidine. 3 helical membrane passes run 138 to 158 (ALGA…LIPV), 169 to 189 (LQIL…LHLI), and 214 to 234 (GPIL…LVVE). Basic residues predominate over residues 242-255 (GGHGHSHGHGHTHG). The segment at 242–313 (GGHGHSHGHG…QNSEEEKTGS (72 aa)) is disordered. A compositionally biased stretch (low complexity) spans 256 to 266 (HTQGSHGHGTQ). 2 positions are modified to phosphoserine: Ser275 and Ser276. Positions 295–313 (RLKDGPLRPQNSEEEKTGS) are enriched in basic and acidic residues. Helical transmembrane passes span 386-406 (LTAI…GGAV), 417-437 (GWVL…SVLP), and 448-468 (SLLE…IAHL).

The protein belongs to the ZIP transporter (TC 2.A.5) family. KE4/Catsup subfamily. Homodimer. Methylation at some His residue by METTL9 leads to reduced zinc-binding. Post-translationally, rapidly phosphorylated by CK2 following Zn(2+) treatment. This phosphorylation is required for efficient cytosolic Zn(2+) release.

The protein localises to the endoplasmic reticulum membrane. Its subcellular location is the golgi apparatus. It is found in the cis-Golgi network membrane. It carries out the reaction Zn(2+)(in) = Zn(2+)(out). Its function is as follows. Transports Zn(2+) from the endoplasmic reticulum (ER)/Golgi apparatus to the cytosol, playing an essential role in the regulation of cytosolic zinc levels. Acts as a gatekeeper of zinc release from intracellular stores, requiring post-translational activation by phosphorylation, resulting in activation of multiple downstream pathways leading to cell growth and proliferation. Has an essential role in B cell development and is required for proper B cell receptor signaling. Plays an important role in maintaining intestinal epithelial homeostasis and skin dermis development by regulating ER function. Controls cell signaling pathways involved in glucose metabolism in skeletal muscle. Has a protective role against ER stress in different biological contexts. Mediates Zn(2+)-induced ferroptosis. The protein is Zinc transporter SLC39A7 of Canis lupus familiaris (Dog).